Reading from the N-terminus, the 361-residue chain is Salt tolerance receptor-like cytoplasmic kinase 1 (361 aa).

Residues cysteine 5, cysteine 10, and cysteine 14 are each lipidated (S-palmitoyl cysteine). Positions glycine 67–leucine 347 constitute a Protein kinase domain. ATP-binding positions include isoleucine 73–valine 81 and lysine 95. Aspartate 195 serves as the catalytic Proton acceptor.

The protein belongs to the protein kinase superfamily. Ser/Thr protein kinase family. In terms of assembly, self-interacts. Interacts with CATA, CATB and CATC at the plasma membrane. Palmitoylated. Palmotylation at Cys-5, Cys-10 and Cys-14 by DHHC9 is required for plasma membrane targeting and STRK1 function. Post-translationally, autophosphorylated. Accumulates in seeds. Mainly expressed in young roots, and, to a lower extent, in leaf veins, seedlings, stems, leaf sheath and young spikelet.

It localises to the cell membrane. The enzyme catalyses L-seryl-[protein] + ATP = O-phospho-L-seryl-[protein] + ADP + H(+). It catalyses the reaction L-threonyl-[protein] + ATP = O-phospho-L-threonyl-[protein] + ADP + H(+). The catalysed reaction is L-tyrosyl-[protein] + ATP = O-phospho-L-tyrosyl-[protein] + ADP + H(+). Acts probably as a dual specificity protein kinase. Regulates hydrogen peroxide (H(2)O(2)) homeostasis and improves salt tolerance by phosphorylating tyrosine residues of CATC thus activating its catalase activity. Promotes growth at the seedling stage and prevents grain yield loss under salt stress conditions. The sequence is that of Salt tolerance receptor-like cytoplasmic kinase 1 from Oryza sativa subsp. japonica (Rice).